The sequence spans 308 residues: Elongation factor Ts (308 aa).

The segment at 80–83 (TDFV) is involved in Mg(2+) ion dislocation from EF-Tu.

Belongs to the EF-Ts family.

Its subcellular location is the cytoplasm. Associates with the EF-Tu.GDP complex and induces the exchange of GDP to GTP. It remains bound to the aminoacyl-tRNA.EF-Tu.GTP complex up to the GTP hydrolysis stage on the ribosome. The chain is Elongation factor Ts from Rhizobium rhizogenes (strain K84 / ATCC BAA-868) (Agrobacterium radiobacter).